The sequence spans 229 residues: Type-5 uracil-DNA glycosylase (229 aa).

[4Fe-4S] cluster-binding residues include Cys-19, Cys-22, Cys-123, and Cys-138.

This sequence belongs to the uracil-DNA glycosylase (UDG) superfamily. Type 5 (UDGb) family.

Its function is as follows. DNA glycosylase with broad substrate specificity. The protein is Type-5 uracil-DNA glycosylase of Mycobacterium leprae (strain TN).